The sequence spans 343 residues: Aldehyde reductase 2 (343 aa).

Tyr-177 is a binding site for NADP(+).

It belongs to the NAD(P)-dependent epimerase/dehydratase family. Dihydroflavonol-4-reductase subfamily. In terms of assembly, monomer.

It catalyses the reaction a primary alcohol + NADP(+) = an aldehyde + NADPH + H(+). With respect to regulation, inhibited by quercetin and diphenylhydantoin. In terms of biological role, catalyzes the asymmetric reduction of o-substituted aliphatic and aromatic aldehydes and ketones to an S-enantiomer. Reduces ethyl 4-chloro-3-oxobutanoate to ethyl (S)-4-chloro-3-hydroxybutanoate. The polypeptide is Aldehyde reductase 2 (Sporidiobolus salmonicolor (Yeast-like fungus)).